The chain runs to 144 residues: Large ribosomal subunit protein uL22 (144 aa).

Residues 1–38 form a disordered region; the sequence is MAETQTTKKGAKRVRQPVPARRSKPNRPAKAAPGPHAS. Residues 9–27 show a composition bias toward basic residues; the sequence is KGAKRVRQPVPARRSKPNR.

It belongs to the universal ribosomal protein uL22 family. Part of the 50S ribosomal subunit.

This protein binds specifically to 23S rRNA; its binding is stimulated by other ribosomal proteins, e.g. L4, L17, and L20. It is important during the early stages of 50S assembly. It makes multiple contacts with different domains of the 23S rRNA in the assembled 50S subunit and ribosome. Functionally, the globular domain of the protein is located near the polypeptide exit tunnel on the outside of the subunit, while an extended beta-hairpin is found that lines the wall of the exit tunnel in the center of the 70S ribosome. This Anaeromyxobacter sp. (strain Fw109-5) protein is Large ribosomal subunit protein uL22.